We begin with the raw amino-acid sequence, 280 residues long: Large ribosomal subunit protein uL2 (280 aa).

Disordered regions lie at residues 29 to 58 (PEKS…GGGH) and 225 to 280 (VMNP…NKKR). A compositionally biased stretch (basic residues) spans 45–58 (SHGHITTRHRGGGH). The segment covering 253–269 (KEGRTRKPKRYSDDMIV) has biased composition (basic and acidic residues). Residues 270-280 (RRRRANKNKKR) are compositionally biased toward basic residues.

The protein belongs to the universal ribosomal protein uL2 family. As to quaternary structure, part of the 50S ribosomal subunit. Forms a bridge to the 30S subunit in the 70S ribosome.

In terms of biological role, one of the primary rRNA binding proteins. Required for association of the 30S and 50S subunits to form the 70S ribosome, for tRNA binding and peptide bond formation. It has been suggested to have peptidyltransferase activity; this is somewhat controversial. Makes several contacts with the 16S rRNA in the 70S ribosome. This Corynebacterium glutamicum (strain R) protein is Large ribosomal subunit protein uL2.